Reading from the N-terminus, the 179-residue chain is Large ribosomal subunit protein uL5 (179 aa).

The protein belongs to the universal ribosomal protein uL5 family. As to quaternary structure, part of the 50S ribosomal subunit; part of the 5S rRNA/L5/L18/L25 subcomplex. Contacts the 5S rRNA and the P site tRNA. Forms a bridge to the 30S subunit in the 70S ribosome.

Functionally, this is one of the proteins that bind and probably mediate the attachment of the 5S RNA into the large ribosomal subunit, where it forms part of the central protuberance. In the 70S ribosome it contacts protein S13 of the 30S subunit (bridge B1b), connecting the 2 subunits; this bridge is implicated in subunit movement. Contacts the P site tRNA; the 5S rRNA and some of its associated proteins might help stabilize positioning of ribosome-bound tRNAs. In Nitratidesulfovibrio vulgaris (strain ATCC 29579 / DSM 644 / CCUG 34227 / NCIMB 8303 / VKM B-1760 / Hildenborough) (Desulfovibrio vulgaris), this protein is Large ribosomal subunit protein uL5.